Here is a 415-residue protein sequence, read N- to C-terminus: Autophagy-related protein 19 (415 aa).

The interval 21 to 28 (YDECNKFQ) is ATG11-binding. A compositionally biased stretch (basic and acidic residues) spans 126–135 (CREDAHEDPV). Residues 126-150 (CREDAHEDPVSPKAGSEEEISPNST) are disordered. Phosphoserine is present on residues serine 136 and serine 141. The stretch at 157–187 (RECLDNFMKQLLKLEESLNKLELEQKVTNKE) forms a coiled coil. Residues lysine 213 and lysine 216 each participate in a glycyl lysine isopeptide (Lys-Gly) (interchain with G-Cter in ubiquitin) cross-link. The residue at position 243 (serine 243) is a Phosphoserine. Residues 254–367 (VEPPNERSLQ…LRPPSRLSAE (114 aa)) are AMS1-binding. An ATG8-binding region spans residues 406–415 (NEKALTWEEL). Residues 412–415 (WEEL) carry the WXXL motif.

Interacts with the vacuolar aminopeptidase 1 (LAP4) precursor and mature forms. Also interacts with AMS1, APE4, ATG8 ATG11, and UBP3. Post-translationally, polyubiquitinated at Lys-213 and Lys-216. Deubiquitination by UBP3 is required for full activity of ATG19.

The protein localises to the preautophagosomal structure membrane. Functionally, cargo-receptor protein involved in the cytoplasm to vacuole transport (Cvt) and in autophagy. Recognizes cargo proteins, such as APE4, LAP3, LAP4 and AMS1 and delivers them to the pre-autophagosomal structure for eventual engulfment by the autophagosome and targeting to the vacuole. Involved in the organization of the preautophagosomal structure (PAS). ATG19 association with cargo protein is required to localize ATG11 to the PAS. Also involved in endoplasmic reticulum-specific autophagic process, in selective removal of ER-associated degradation (ERAD) substrates, and is essential for the survival of cells subjected to severe ER stress. Also plays a role in regulation of filamentous growth. This Saccharomyces cerevisiae (strain YJM789) (Baker's yeast) protein is Autophagy-related protein 19 (ATG19).